We begin with the raw amino-acid sequence, 60 residues long: Large ribosomal subunit protein uL30 (60 aa).

This sequence belongs to the universal ribosomal protein uL30 family. As to quaternary structure, part of the 50S ribosomal subunit.

The protein is Large ribosomal subunit protein uL30 of Moorella thermoacetica (strain ATCC 39073 / JCM 9320).